Consider the following 215-residue polypeptide: Pyrrolidone-carboxylate peptidase (215 aa).

Active-site residues include E80, C143, and H167.

The protein belongs to the peptidase C15 family. In terms of assembly, homotetramer.

The protein localises to the cytoplasm. It catalyses the reaction Release of an N-terminal pyroglutamyl group from a polypeptide, the second amino acid generally not being Pro.. In terms of biological role, removes 5-oxoproline from various penultimate amino acid residues except L-proline. The sequence is that of Pyrrolidone-carboxylate peptidase from Bacillus mycoides (strain KBAB4) (Bacillus weihenstephanensis).